We begin with the raw amino-acid sequence, 145 residues long: 3-dehydroquinate dehydratase 1 (145 aa).

Residue Y24 is the Proton acceptor of the active site. 3 residues coordinate substrate: N75, H81, and D88. The Proton donor role is filled by H101. Substrate contacts are provided by residues 102-103 and R112; that span reads IS.

The protein belongs to the type-II 3-dehydroquinase family. In terms of assembly, homododecamer.

The catalysed reaction is 3-dehydroquinate = 3-dehydroshikimate + H2O. Its pathway is metabolic intermediate biosynthesis; chorismate biosynthesis; chorismate from D-erythrose 4-phosphate and phosphoenolpyruvate: step 3/7. Its function is as follows. Catalyzes a trans-dehydration via an enolate intermediate. The polypeptide is 3-dehydroquinate dehydratase 1 (aroQ1) (Agrobacterium fabrum (strain C58 / ATCC 33970) (Agrobacterium tumefaciens (strain C58))).